Reading from the N-terminus, the 480-residue chain is ATP synthase subunit beta 1 (480 aa).

154–161 is a binding site for ATP; sequence GGAGVGKT.

This sequence belongs to the ATPase alpha/beta chains family. In terms of assembly, F-type ATPases have 2 components, CF(1) - the catalytic core - and CF(0) - the membrane proton channel. CF(1) has five subunits: alpha(3), beta(3), gamma(1), delta(1), epsilon(1). CF(0) has four main subunits: a(1), b(1), b'(1) and c(9-12).

It localises to the cell inner membrane. The catalysed reaction is ATP + H2O + 4 H(+)(in) = ADP + phosphate + 5 H(+)(out). Its function is as follows. Produces ATP from ADP in the presence of a proton gradient across the membrane. The catalytic sites are hosted primarily by the beta subunits. The protein is ATP synthase subunit beta 1 of Chlorobaculum tepidum (strain ATCC 49652 / DSM 12025 / NBRC 103806 / TLS) (Chlorobium tepidum).